A 146-amino-acid polypeptide reads, in one-letter code: CysO-cysteine peptidase (146 aa).

The region spanning leucine 11–alanine 134 is the MPN domain. Zn(2+) is bound by residues histidine 88, histidine 90, and aspartate 101. The JAMM motif motif lies at histidine 88 to aspartate 101.

Belongs to the peptidase M67A family. Zn(2+) serves as cofactor.

It catalyses the reaction [CysO sulfur-carrier protein]-Gly-NH-CH2-C(O)-S-L-Cys + H2O = [CysO sulfur-carrier protein]-C-terminal Gly-Gly + L-cysteine + H(+). Its pathway is amino-acid biosynthesis; L-cysteine biosynthesis. Its function is as follows. Protease that hydrolyzes the covalent CysO-cysteine adduct synthesized by CysM to release L-cysteine and regenerate CysO. The protein is CysO-cysteine peptidase (mec) of Mycobacterium bovis (strain ATCC BAA-935 / AF2122/97).